Reading from the N-terminus, the 1931-residue chain is Cytadherence high molecular weight protein 2 (1931 aa).

Coiled-coil stretches lie at residues 1626–1659, 1768–1846, and 1903–1930; these read KEHQ…LTES, FNTQ…IKTN, and HAKK…KQTS.

In terms of biological role, component of the cytoskeleton-like structure which stabilizes the shape of the wall-less Mycoplasma. This cytoskeleton-like network of accessory proteins containing HMW proteins 1 to 5 allows the proper anchoring of cytadhesin proteins in the mycoplasmal membrane at the attachment organelle. In Mycoplasmoides gallisepticum (strain R(low / passage 15 / clone 2)) (Mycoplasma gallisepticum), this protein is Cytadherence high molecular weight protein 2 (hlp2).